The primary structure comprises 73 residues: Large ribosomal subunit protein bL28 (73 aa).

This sequence belongs to the bacterial ribosomal protein bL28 family.

In Anaeromyxobacter sp. (strain Fw109-5), this protein is Large ribosomal subunit protein bL28.